A 101-amino-acid chain; its full sequence is Small ribosomal subunit protein uS14 (101 aa).

This sequence belongs to the universal ribosomal protein uS14 family. As to quaternary structure, part of the 30S ribosomal subunit. Contacts proteins S3 and S10.

Binds 16S rRNA, required for the assembly of 30S particles and may also be responsible for determining the conformation of the 16S rRNA at the A site. This Kocuria rhizophila (strain ATCC 9341 / DSM 348 / NBRC 103217 / DC2201) protein is Small ribosomal subunit protein uS14.